The sequence spans 600 residues: Elongation factor 4 (600 aa).

The region spanning 3-185 (KYIRNFSIIA…CLIHDIPHPQ (183 aa)) is the tr-type G domain. Residues 15 to 20 (DHGKST) and 132 to 135 (NKID) contribute to the GTP site.

This sequence belongs to the TRAFAC class translation factor GTPase superfamily. Classic translation factor GTPase family. LepA subfamily.

It localises to the cell inner membrane. It catalyses the reaction GTP + H2O = GDP + phosphate + H(+). Functionally, required for accurate and efficient protein synthesis under certain stress conditions. May act as a fidelity factor of the translation reaction, by catalyzing a one-codon backward translocation of tRNAs on improperly translocated ribosomes. Back-translocation proceeds from a post-translocation (POST) complex to a pre-translocation (PRE) complex, thus giving elongation factor G a second chance to translocate the tRNAs correctly. Binds to ribosomes in a GTP-dependent manner. The protein is Elongation factor 4 of Blochmanniella pennsylvanica (strain BPEN).